The following is a 604-amino-acid chain: Netrin-1 (604 aa).

An N-terminal signal peptide occupies residues 1–24 (MMRAVWEALAALAAVACLVGAVRG). Residues 47-284 (HPRRCIPDFV…AVSDLQVGGR (238 aa)) enclose the Laminin N-terminal domain. N-linked (GlcNAc...) asparagine glycans are attached at residues N95, N116, and N131. Intrachain disulfides connect C119/C152, C285/C294, C287/C304, C306/C315, C318/C338, C341/C350, C343/C368, C371/C380, C383/C401, C404/C416, C406/C423, C425/C434, C437/C451, C472/C544, and C491/C601. Laminin EGF-like domains lie at 285-340 (CKCN…ECVA), 341-403 (CNCN…ACKA), and 404-453 (CDCH…PCIK). The N-linked (GlcNAc...) asparagine glycan is linked to N417. One can recognise an NTR domain in the interval 472–601 (CDSYCKASKG…FQQREKKGKC (130 aa)). The Cell attachment site signature appears at 530-532 (RGD).

Binds to its receptors; DCC, UNC5A, UNC5B, UNC5C and probably UNC5D. Binds to its receptor; DSCAM. Interacts with APP. In the embryo, widely expressed in the developing nervous system and in mesodermal tissues.

It is found in the secreted. The protein localises to the cytoplasm. Its function is as follows. Netrins control guidance of CNS commissural axons and peripheral motor axons. Its association with either DCC or some UNC5 receptors will lead to axon attraction or repulsion, respectively. Binding to UNC5C might cause dissociation of UNC5C from polymerized TUBB3 in microtubules and thereby lead to increased microtubule dynamics and axon repulsion. Involved in dorsal root ganglion axon projection towards the spinal cord. It also serves as a survival factor via its association with its receptors which prevent the initiation of apoptosis. Involved in colorectal tumorigenesis by regulating apoptosis. The chain is Netrin-1 (Ntn1) from Mus musculus (Mouse).